The sequence spans 269 residues: Phosphate import ATP-binding protein PstB 2 (269 aa).

Residues 22 to 264 (LSTNDLRVFY…PSLQSTEDYV (243 aa)) form the ABC transporter domain. An ATP-binding site is contributed by 55 to 62 (GPSGSGKS).

Belongs to the ABC transporter superfamily. Phosphate importer (TC 3.A.1.7) family. As to quaternary structure, the complex is composed of two ATP-binding proteins (PstB), two transmembrane proteins (PstC and PstA) and a solute-binding protein (PstS).

The protein resides in the cell membrane. The catalysed reaction is phosphate(out) + ATP + H2O = ADP + 2 phosphate(in) + H(+). In terms of biological role, part of the ABC transporter complex PstSACB involved in phosphate import. Responsible for energy coupling to the transport system. The polypeptide is Phosphate import ATP-binding protein PstB 2 (Lactococcus lactis subsp. lactis (strain IL1403) (Streptococcus lactis)).